Reading from the N-terminus, the 50-residue chain is MEYRYYCHSSFRFLKGGDGETGRWQGQFATLDSFSHYRLSLSLLAACSRW.

This is an uncharacterized protein from His1 virus (isolate Australia/Victoria) (His1V).